Consider the following 299-residue polypeptide: Coenzyme PQQ synthesis protein B (299 aa).

This sequence belongs to the PqqB family.

Its pathway is cofactor biosynthesis; pyrroloquinoline quinone biosynthesis. Functionally, may be involved in the transport of PQQ or its precursor to the periplasm. This Methylobacterium sp. (strain 4-46) protein is Coenzyme PQQ synthesis protein B.